A 627-amino-acid chain; its full sequence is Anti-CBASS protein Acb1 (627 aa).

3',3'-cGAMP is bound at residue tyrosine 105. Position 105 (tyrosine 105) interacts with 3',3'-cUAMP. Residues leucine 437–proline 474 form a disordered region. Catalysis depends on residues histidine 508, threonine 510, histidine 584, and threonine 586. Positions 614 and 620 each coordinate 3',3'-cGAMP. 3',3'-cUAMP-binding residues include glutamate 614 and tryptophan 620.

The protein belongs to the anti-CBASS protein Acb1 family.

It carries out the reaction 3',3'-cUAMP + H2O = U[3'-5']pAp[3'] + H(+). The enzyme catalyses 3',3',3'-c-tri-AMP + H2O = A[3'-5']pA[3'-5']pAp[3'] + H(+). It catalyses the reaction 3',3',3'-cAAG + H2O = G[3'-5']pA[3'-5']pAp[3'] + H(+). The catalysed reaction is 3',3',3'-cAAG + H2O = A[3'-5']pG[3'-5']pAp[3'] + H(+). It carries out the reaction 3',3'-cGAMP + H2O = G[3'-5']pAp[3'] + H(+). In terms of biological role, counteracts or regulates the endogenous CBASS antiviral defense system. Phosphodiesterase that enables metal-independent hydrolysis of the host cyclic di- and trinucleotide CBASS signals such as 3'3'-cGAMP, 3'3'cUA, and 3'3'3'-cAAA. In Caulobacter sp. (strain RHG1), this protein is Anti-CBASS protein Acb1.